A 324-amino-acid polypeptide reads, in one-letter code: Endochitinase 1 (324 aa).

The first 22 residues, M1–A22, serve as a signal peptide directing secretion. Residues E23–G64 enclose the Chitin-binding type-1 domain. 7 cysteine pairs are disulfide-bonded: C25-C40, C34-C46, C39-C53, C58-C62, C95-C158, C170-C178, and C277-C309. The active-site Proton donor is the E139. Positions G318 to M324 are cleaved as a propeptide — removed in mature form.

The protein belongs to the glycosyl hydrolase 19 family. Chitinase class I subfamily.

It carries out the reaction Random endo-hydrolysis of N-acetyl-beta-D-glucosaminide (1-&gt;4)-beta-linkages in chitin and chitodextrins.. Functionally, defense against chitin-containing fungal pathogens. The chain is Endochitinase 1 from Gossypium hirsutum (Upland cotton).